The primary structure comprises 149 residues: Deoxyuridine 5'-triphosphate nucleotidohydrolase (149 aa).

Substrate contacts are provided by residues 68–70 (RSG), Asn-81, and 85–87 (LID).

It belongs to the dUTPase family. It depends on Mg(2+) as a cofactor.

It carries out the reaction dUTP + H2O = dUMP + diphosphate + H(+). It functions in the pathway pyrimidine metabolism; dUMP biosynthesis; dUMP from dCTP (dUTP route): step 2/2. Functionally, this enzyme is involved in nucleotide metabolism: it produces dUMP, the immediate precursor of thymidine nucleotides and it decreases the intracellular concentration of dUTP so that uracil cannot be incorporated into DNA. This Nitrosomonas eutropha (strain DSM 101675 / C91 / Nm57) protein is Deoxyuridine 5'-triphosphate nucleotidohydrolase.